The following is a 505-amino-acid chain: Catalase (505 aa).

The tract at residues 1 to 25 is disordered; it reads MSQQDKKLTGVFGHPVSDRENSMTA. Catalysis depends on residues H56 and N129. Y339 provides a ligand contact to heme.

Belongs to the catalase family. In terms of assembly, homodimer. The cofactor is heme.

It carries out the reaction 2 H2O2 = O2 + 2 H2O. In terms of biological role, decomposes hydrogen peroxide into water and oxygen; serves to protect cells from the toxic effects of hydrogen peroxide. The protein is Catalase (katA) of Staphylococcus aureus (strain MSSA476).